The sequence spans 584 residues: AP-1-like transcription factor yap1 (584 aa).

The interval 23-179 (LAALSSNQPP…AFRERKEKHL (157 aa)) is disordered. The short motif at 35-42 (QQNDKQRS) is the Bipartite nuclear localization signal element. Residues 36-48 (QNDKQRSQAKTDP) are compositionally biased toward basic and acidic residues. The segment covering 52–67 (PGNMSSGSFSMSPGFN) has biased composition (low complexity). Residues 68–75 (KTHPGSGG) carry the Bipartite nuclear localization signal motif. Over residues 79-94 (GDDESPFLDFNPELDF) the composition is skewed to acidic residues. 2 stretches are compositionally biased toward basic and acidic residues: residues 112 to 144 (SEEHEVGEKRKDMSDNENEESGKKRRESDDKAA) and 170 to 179 (AFRERKEKHL). Residues 154 to 217 (SEPTSKRKAQ…ERLQVELREY (64 aa)) form the bZIP domain. Residues 159 to 180 (KRKAQNRAAQRAFRERKEKHLK) are basic motif. A leucine-zipper region spans residues 182–189 (LETKVDEL). The transcription activation 1 stretch occupies residues 211–332 (QVELREYRKR…PSPKVPSVYN (122 aa)). Disordered regions lie at residues 267–379 (IFNG…TKLN) and 418–441 (RGKSESVSNTPSQPNNNYEQTPGP). Residues 284-296 (SSPATSDSQVPGV) form a n-CRD region. The span at 300–309 (ETLNGSNNRG) shows a compositional bias: polar residues. Positions 336–362 (SASSHDSSNSCSPSSSSDSHQSQMLSS) are enriched in low complexity. Composition is skewed to polar residues over residues 363 to 379 (NGTSPEPSSNSPATKLN) and 422 to 437 (ESVSNTPSQPNNNYEQ). The segment at 377–480 (KLNDSVQNHH…SQDFGTFFDD (104 aa)) is transcription activation 2. Cystine bridges form between C531–C555, C531–C564, and C555–C564. The interval 531 to 564 (CTKIWDRLQSMEKFRNGEIDVDNLCSELRTKARC) is c-CRD. The Nuclear export signal motif lies at 549-556 (IDVDNLCS).

This sequence belongs to the bZIP family. YAP subfamily. Depending on the oxidative stress inducing agent, yap1 can undergo two distinct conformational changes, both involving disulfide bond formation, and both masking the nuclear export signal, thus abolishing nuclear export.

It localises to the nucleus. It is found in the cytoplasm. Functionally, transcription activator involved in oxidative stress response and redox homeostasis. Regulates the transcription of genes encoding antioxidant enzymes and components of the cellular thiol-reducing pathways. May be involved in antifungal resistance to voriconazole. This chain is AP-1-like transcription factor yap1, found in Aspergillus flavus (strain ATCC 200026 / FGSC A1120 / IAM 13836 / NRRL 3357 / JCM 12722 / SRRC 167).